A 389-amino-acid polypeptide reads, in one-letter code: Phospho-N-acetylmuramoyl-pentapeptide-transferase (389 aa).

10 helical membrane-spanning segments follow: residues 25–45, 73–93, 97–117, 135–155, 190–210, 222–242, 258–278, 286–306, 311–331, and 366–386; these read RAVM…PWVI, TMGG…WGDL, FIWI…VDDY, FWQS…VSEA, ISYP…IVGA, GLVI…AYVM, GAGE…AFLW, VFMG…VAVI, IVLF…MLQV, and QVVV…LSTL.

The protein belongs to the glycosyltransferase 4 family. MraY subfamily. Mg(2+) is required as a cofactor.

The protein resides in the cell inner membrane. It carries out the reaction UDP-N-acetyl-alpha-D-muramoyl-L-alanyl-gamma-D-glutamyl-meso-2,6-diaminopimeloyl-D-alanyl-D-alanine + di-trans,octa-cis-undecaprenyl phosphate = di-trans,octa-cis-undecaprenyl diphospho-N-acetyl-alpha-D-muramoyl-L-alanyl-D-glutamyl-meso-2,6-diaminopimeloyl-D-alanyl-D-alanine + UMP. It participates in cell wall biogenesis; peptidoglycan biosynthesis. Functionally, catalyzes the initial step of the lipid cycle reactions in the biosynthesis of the cell wall peptidoglycan: transfers peptidoglycan precursor phospho-MurNAc-pentapeptide from UDP-MurNAc-pentapeptide onto the lipid carrier undecaprenyl phosphate, yielding undecaprenyl-pyrophosphoryl-MurNAc-pentapeptide, known as lipid I. This is Phospho-N-acetylmuramoyl-pentapeptide-transferase from Burkholderia mallei (strain NCTC 10247).